Here is a 183-residue protein sequence, read N- to C-terminus: uncharacterized protein (183 aa).

This sequence to M.leprae ML2442.

This is an uncharacterized protein from Mycobacterium tuberculosis (strain CDC 1551 / Oshkosh).